A 58-amino-acid polypeptide reads, in one-letter code: Large ribosomal subunit protein bL32 (58 aa).

It belongs to the bacterial ribosomal protein bL32 family.

In Sulfurihydrogenibium sp. (strain YO3AOP1), this protein is Large ribosomal subunit protein bL32.